The chain runs to 417 residues: Odorant receptor 65a (417 aa).

At 1–62 (MTELRSERKN…MNSEQRRLPR (62 aa)) the chain is on the cytoplasmic side. The chain crosses the membrane as a helical span at residues 63-83 (IVAWQYFVSIQLATALASLFY). At 84–98 (GISESIGDIVNLGRD) the chain is on the extracellular side. Residues 99-119 (LVFIITIIFICFRLVFFAQYA) traverse the membrane as a helical segment. Residues 120-152 (GELDVIIDALEDIYHWSIKGPATKEVQETKRLH) lie on the Cytoplasmic side of the membrane. The helical transmembrane segment at 153 to 173 (FLLFMALIITWFSFLILFMLI) threads the bilayer. At 174-206 (KISTPFWIESQTLPFHVSWPFQLHDPSKHPIAY) the chain is on the extracellular side. A helical transmembrane segment spans residues 207–227 (IIIFVSQSTTMLYFLIWLGVV). Residues 228–290 (ENMGVSLFFE…TDRCNHIFNG (63 aa)) are Cytoplasmic-facing. A helical transmembrane segment spans residues 291–311 (AFIMQMLINFLLVSLSLFEVL). The Extracellular segment spans residues 312–316 (AAKKN). The helical transmembrane segment at 317 to 337 (PQVAVEYMIIMLMTLGHLSFW) threads the bilayer. The Cytoplasmic segment spans residues 338–393 (SKFGDMFSKESEQVALAVYEAYDPNVGSKSIHRQFCFFIQRAQKPLIMKASPFPPF). Residues 394 to 414 (NLENYMFILKQCYSILTILAN) traverse the membrane as a helical segment. At 415–417 (TLE) the chain is on the extracellular side.

It belongs to the insect chemoreceptor superfamily. Heteromeric odorant receptor channel (TC 1.A.69) family. Or49a subfamily. As to quaternary structure, interacts with Orco. Complexes exist early in the endomembrane system in olfactory sensory neurons (OSNs), coupling these complexes to the conserved ciliary trafficking pathway. As to expression, expressed in olfactory sensory neurons in the antenna.

Its subcellular location is the cell membrane. Its function is as follows. Odorant receptor which mediates acceptance or avoidance behavior, depending on its substrates. The odorant receptor repertoire encodes a large collection of odor stimuli that vary widely in identity, intensity, and duration. May form a complex with Orco to form odorant-sensing units, providing sensitive and prolonged odorant signaling and calcium permeability. Involved in olfactory communication for modulating aggression through the sensing of the male-specific pheromone 11-cis-vaccenyl acetate (cVA). Although acute exposure to cVA elicites aggression through Or67d olfactory receptor neurons (ORNs), chronic cVA exposure reduces aggression through Or65a ORNs. Moreover, cVA leads to generalized learning with mated females. It is a major component of the male cuticular hydrocarbon profile, but it is not found on virgin females. During copulation, cVA is transferred to the female in ejaculate along with sperm and peptides that decrease her sexual receptivity. This Drosophila melanogaster (Fruit fly) protein is Odorant receptor 65a (Or65a).